A 135-amino-acid polypeptide reads, in one-letter code: RDAQAEVQMTNAGVQLAGGSALCRHRPQQSIKRLVIRGRGIQLNDESVSSSLGLRPDGVFQIAGCGRSSFTPRQAVLTLESSSSQPRSGGIGTLQFVEEFTPSVYFNPFSGSPGQYPDEFIPNFDAISESVDGYD.

A propeptide spanning residues 1 to 19 is cleaved from the precursor; sequence RDAQAEVQMTNAGVQLAGG.

This sequence belongs to the adenoviridae pVIII family.

The chain is Hexon-associated protein (PVIII) from Homo sapiens (Human).